The chain runs to 751 residues: MIPPASSTPPGEAVIPSVAPQDFWRSPISSYSGSVTGHISHRANNFKRHPKRRKYIRPSPPPPPNTPCPIELVDFGDLHPQRSFWELLFNGCILFGIEFSYAMETAYVTPVLLQMGLPDQLYSLVWFISPILGFLLQPLLGAWSDRCTSRFGRRRPFILVLAIGALLGLSLLLNGRDIGMALADTATNHKWGILLTVCGVVLMDFSADSADNPSHAYMMDVCGPVDQDRGLNIHALMAGLGGGFGYVVGGIHWDKTSFGRALGGQLRVIYVFTAITLSVTTVLTLISIPERPLRPLGEKRTAMKSPSLPLPPSPPVLLEEGAGDALPSTTATSLYASFSSPISPPSPLTPKYGSFISRDSSLTGINEFASSFGTSNIDSVLIDCFTAGHDNYLALPSSVPRQAISVSFPRAPDGFYCQERGLERREGPLTLGSDGDVLRVGSLDTSKPRASGILKRPQTLALPDVAGGNGPETSRRRNVTFSQQVANILLNGVKYESELTGSSEQSEQPLSLRHLCSTIYNMPKALRNLCVNHFLGWLSFEGMLLFYTDFMGEVVFQGDPKAPHTSEAYQKYNSGVTMGCWGMCIYAFSAAFYSAILEKLEECLSVRTLYFIAYLAFGLGTGLATLSRNLYVVLSLCTTYGILFSTLCTLPYSLLCDYYQSKKFAGSSADGTRRGMGVDISLLSCQYFLAQILVSLVLGPLTSAVGSANGVMYFSSLVSFLGCLYSSLCVTYEIPSVDAADEERQPLLLNV.

The next 6 helical transmembrane spans lie at 93–113 (ILFG…PVLL), 123–143 (SLVW…LGAW), 155–175 (RPFI…LLNG), 191–211 (WGIL…DSAD), 233–253 (IHAL…GIHW), and 268–288 (VIYV…LISI). Thr500 carries the phosphothreonine modification. 6 consecutive transmembrane segments (helical) span residues 536 to 556 (GWLS…EVVF), 576 to 596 (VTMG…YSAI), 606 to 626 (VRTL…LATL), 630 to 650 (LYVV…LCTL), 688 to 708 (FLAQ…VGSA), and 710 to 730 (GVMY…SLCV).

The protein belongs to the glycoside-pentoside-hexuronide (GPH) cation symporter transporter (TC 2.A.2) family.

It localises to the membrane. It catalyses the reaction D-galactose(in) + H(+)(in) = D-galactose(out) + H(+)(out). The enzyme catalyses D-glucose(out) + H(+)(out) = D-glucose(in) + H(+)(in). In terms of biological role, proton-associated glucose transporter in the brain. The sequence is that of Proton-associated sugar transporter A from Mus musculus (Mouse).